The chain runs to 760 residues: Catalase-peroxidase (760 aa).

The segment at 1 to 24 is disordered; the sequence is MAESKCPFKSQGSRSNVAGGGTRN. The tryptophyl-tyrosyl-methioninium (Trp-Tyr) (with M-268) cross-link spans 96–242; that stretch reads WHSAGTYRVF…LAAAHMGLIY (147 aa). Residue His97 is the Proton acceptor of the active site. Residues 242-268 constitute a cross-link (tryptophyl-tyrosyl-methioninium (Tyr-Met) (with W-96)); the sequence is YVNPEGPDGNPDPVAAAHDIRVTFGRM. His283 contacts heme b.

This sequence belongs to the peroxidase family. Peroxidase/catalase subfamily. In terms of assembly, homodimer or homotetramer. Heme b is required as a cofactor. Post-translationally, formation of the three residue Trp-Tyr-Met cross-link is important for the catalase, but not the peroxidase activity of the enzyme.

The protein resides in the cytoplasm. The enzyme catalyses H2O2 + AH2 = A + 2 H2O. It carries out the reaction 2 H2O2 = O2 + 2 H2O. Functionally, bifunctional enzyme with both catalase and broad-spectrum peroxidase activity. This is Catalase-peroxidase from Aspergillus clavatus (strain ATCC 1007 / CBS 513.65 / DSM 816 / NCTC 3887 / NRRL 1 / QM 1276 / 107).